A 217-amino-acid chain; its full sequence is Large ribosomal subunit protein uL3 (217 aa).

The disordered stretch occupies residues 137–160; that stretch reads VSASHGSHRNHRKPGSIGASSTPS.

The protein belongs to the universal ribosomal protein uL3 family. As to quaternary structure, part of the 50S ribosomal subunit. Forms a cluster with proteins L14 and L19.

Functionally, one of the primary rRNA binding proteins, it binds directly near the 3'-end of the 23S rRNA, where it nucleates assembly of the 50S subunit. This chain is Large ribosomal subunit protein uL3, found in Clavibacter michiganensis subsp. michiganensis (strain NCPPB 382).